The sequence spans 876 residues: Beta-glucosidase 1 (876 aa).

The first 17 residues, 1-17, serve as a signal peptide directing secretion; that stretch reads MLMIVQLLVFALGLAVA. Residues asparagine 22, asparagine 75, asparagine 224, and asparagine 267 are each glycosylated (N-linked (GlcNAc...) asparagine). The active site involves aspartate 295. Asparagine 332, asparagine 339, asparagine 372, asparagine 389, asparagine 426, asparagine 544, asparagine 585, asparagine 739, asparagine 780, and asparagine 790 each carry an N-linked (GlcNAc...) asparagine glycan.

This sequence belongs to the glycosyl hydrolase 3 family.

It carries out the reaction Hydrolysis of terminal, non-reducing beta-D-glucosyl residues with release of beta-D-glucose.. It functions in the pathway glycan metabolism; cellulose degradation. The chain is Beta-glucosidase 1 (BGL1) from Saccharomycopsis fibuligera (Yeast).